Here is a 250-residue protein sequence, read N- to C-terminus: MPAKLSVNLNAIAMLRNRRDLPWPSVTGLGRTALQAGASGLTVHPRPDQRHIRFSDLQPIRDLIDDEFPAAEFNMEGFPNEAFLELVERHEPEQVTLVPDDPAQATSDHGWDFRKSHNLLGNVVGRLKKRGFRVSLFADGIPDPEALKLAKETGADRIELYTGPYGGCYDDPEKAERIAIELGRTAEIAIGLGLAVNAGHDLTVANLPLLVEHIPELAEVSIGHGLTADALEYGMAETVRRFRRACGETA.

3-amino-2-oxopropyl phosphate is bound by residues Asn8 and Arg19. His44 serves as the catalytic Proton acceptor. Positions 46 and 51 each coordinate 1-deoxy-D-xylulose 5-phosphate. Glu76 serves as the catalytic Proton acceptor. Residue Thr106 participates in 1-deoxy-D-xylulose 5-phosphate binding. His200 (proton donor) is an active-site residue. 3-amino-2-oxopropyl phosphate-binding positions include Asp201 and 223–224; that span reads GH.

Belongs to the PNP synthase family. As to quaternary structure, homooctamer; tetramer of dimers.

Its subcellular location is the cytoplasm. The catalysed reaction is 3-amino-2-oxopropyl phosphate + 1-deoxy-D-xylulose 5-phosphate = pyridoxine 5'-phosphate + phosphate + 2 H2O + H(+). It functions in the pathway cofactor biosynthesis; pyridoxine 5'-phosphate biosynthesis; pyridoxine 5'-phosphate from D-erythrose 4-phosphate: step 5/5. Its function is as follows. Catalyzes the complicated ring closure reaction between the two acyclic compounds 1-deoxy-D-xylulose-5-phosphate (DXP) and 3-amino-2-oxopropyl phosphate (1-amino-acetone-3-phosphate or AAP) to form pyridoxine 5'-phosphate (PNP) and inorganic phosphate. This chain is Pyridoxine 5'-phosphate synthase, found in Rhizobium meliloti (strain 1021) (Ensifer meliloti).